The chain runs to 287 residues: mRNA-capping enzyme regulatory subunit OPG124 (287 aa).

Belongs to the orthopoxvirus mRNA-capping enzyme regulatory subunit family. In terms of assembly, interacts with the catalytic subunit OPG113.

It localises to the virion. Functionally, regulatory subunit of the mRNA cap enzyme which stabilizes the catalytic subunit and enhances its methyltransferase activity through an allosteric mechanism. Heterodimeric mRNA capping enzyme catalyzes the linkage of a N7-methyl-guanosine moiety to the first transcribed nucleotide (cap 0 structure), whereas the methyltransferase OPG102 is responsible for a second methylation at the 2'-O position of the ribose (cap 1 structure). Also involved in early viral gene transcription termination and intermediate viral gene transcription initiation. Early gene transcription termination requires the termination factor VTF, the DNA-dependent ATPase NPH-I/OPG123 and the RAP94/OPG109 subunit of the viral RNA polymerase, as well as the presence of a specific termination motif. Binds, together with RAP94/OPG109, to the termination motif 5'-UUUUUNU-3' in the nascent early mRNA. This chain is mRNA-capping enzyme regulatory subunit OPG124 (OPG124), found in Bos taurus (Bovine).